The following is a 167-amino-acid chain: 6,7-dimethyl-8-ribityllumazine synthase (167 aa).

Residues F26, 60–62 (AFE), and 89–91 (AVI) each bind 5-amino-6-(D-ribitylamino)uracil. Residue 94–95 (ET) participates in (2S)-2-hydroxy-3-oxobutyl phosphate binding. H97 (proton donor) is an active-site residue. Position 122 (F122) interacts with 5-amino-6-(D-ribitylamino)uracil. Position 136 (R136) interacts with (2S)-2-hydroxy-3-oxobutyl phosphate.

This sequence belongs to the DMRL synthase family. Forms an icosahedral capsid composed of 60 subunits, arranged as a dodecamer of pentamers.

The catalysed reaction is (2S)-2-hydroxy-3-oxobutyl phosphate + 5-amino-6-(D-ribitylamino)uracil = 6,7-dimethyl-8-(1-D-ribityl)lumazine + phosphate + 2 H2O + H(+). It participates in cofactor biosynthesis; riboflavin biosynthesis; riboflavin from 2-hydroxy-3-oxobutyl phosphate and 5-amino-6-(D-ribitylamino)uracil: step 1/2. Functionally, catalyzes the formation of 6,7-dimethyl-8-ribityllumazine by condensation of 5-amino-6-(D-ribitylamino)uracil with 3,4-dihydroxy-2-butanone 4-phosphate. This is the penultimate step in the biosynthesis of riboflavin. The protein is 6,7-dimethyl-8-ribityllumazine synthase of Vesicomyosocius okutanii subsp. Calyptogena okutanii (strain HA).